The sequence spans 383 residues: Trihelix transcription factor ASIL1 (383 aa).

Disordered regions lie at residues 1–32 (MEDDDEIQSIPSPGDSSLSPQAPPSPPILPTN), 61–94 (HTPSVTGGGGSGNRNGRGGGGGSGGGGGGRDDCW), 189–295 (IASS…SGVG), and 346–383 (EITQNNQEEEERSRQRGERRIVDDDDDRNGKNNGNVSS). The span at 66–88 (TGGGGSGNRNGRGGGGGSGGGGG) shows a compositional bias: gly residues. The Myb-like domain occupies 94–153 (WSEEATKVLIEAWGDRFSEPGKGTLKQQHWKEVAEIVNKSRQCKYPKTDIQCKNRIDTVK). Over residues 206–225 (NSRSSMFKRQTKGNQIVQQQ) the composition is skewed to polar residues. The segment covering 226 to 235 (QEKRGSDSMR) has biased composition (basic and acidic residues). The short motif at 228 to 241 (KRGSDSMRWHFRKR) is the Bipartite nuclear localization signal element. Residues 246-262 (TESESDPEPEASPEESA) are compositionally biased toward acidic residues. Positions 263-274 (ESLPPLQPIQPL) are enriched in low complexity. Residues 304–365 (FTEAYEKAET…ERSRQRGERR (62 aa)) are a coiled coil. Over residues 356–367 (ERSRQRGERRIV) the composition is skewed to basic and acidic residues.

The protein resides in the nucleus. In terms of biological role, transcription repressor that binds specific DNA sequence such as the GT-box-like motif 5'-CGTGATT-3' in the AT2S3 promoter. Negative regulator of seed maturation genes during seed germination and seedling development. May target GT-box-containing embryonic genes by competing with the binding of transcriptional activators to this promoter region. Contributes to the maintenance and control of seed filling and may repress the maturation program during early embryogenesis. This chain is Trihelix transcription factor ASIL1, found in Arabidopsis thaliana (Mouse-ear cress).